The chain runs to 232 residues: Ubiquinone biosynthesis O-methyltransferase (232 aa).

Positions 36, 55, 76, and 120 each coordinate S-adenosyl-L-methionine.

This sequence belongs to the methyltransferase superfamily. UbiG/COQ3 family.

The enzyme catalyses a 3-demethylubiquinol + S-adenosyl-L-methionine = a ubiquinol + S-adenosyl-L-homocysteine + H(+). The catalysed reaction is a 3-(all-trans-polyprenyl)benzene-1,2-diol + S-adenosyl-L-methionine = a 2-methoxy-6-(all-trans-polyprenyl)phenol + S-adenosyl-L-homocysteine + H(+). The protein operates within cofactor biosynthesis; ubiquinone biosynthesis. O-methyltransferase that catalyzes the 2 O-methylation steps in the ubiquinone biosynthetic pathway. The protein is Ubiquinone biosynthesis O-methyltransferase of Stutzerimonas stutzeri (strain A1501) (Pseudomonas stutzeri).